We begin with the raw amino-acid sequence, 2193 residues long: Genome polyprotein (2193 aa).

Gly2 carries the N-myristoyl glycine; by host lipid modification. Residues 2–1503 (GAQVSTQKTG…HVSRAFICLQ (1502 aa)) lie on the Cytoplasmic side of the membrane. The tract at residues 567–583 (ELQSDVREAVEGAIGRV) is amphipathic alpha-helix. Catalysis depends on for protease 2A activity residues His880 and Asp898. Residues Cys915 and Cys917 each contribute to the Zn(2+) site. The For protease 2A activity role is filled by Cys969. Residues Cys975 and His977 each coordinate Zn(2+). Residues 1109–1181 (NNRWLKKFTE…EQSAPSQGDQ (73 aa)) are membrane-binding. Positions 1109–1247 (NNRWLKKFTE…SPGAGKSVAT (139 aa)) are oligomerization. The interval 1130 to 1134 (AIKIQ) is RNA-binding. The SF3 helicase domain maps to 1213–1369 (EKKMSNYIQF…SMYSQNGKIN (157 aa)). Zn(2+)-binding residues include Cys1377, Cys1389, and Cys1394. A C4-type; degenerate zinc finger spans residues 1377–1394 (CDEECCPVNFKKCCPLVC). The interval 1421-1428 (EYNHRHSV) is RNA-binding. The oligomerization stretch occupies residues 1432–1437 (LEALFQ). The stretch at 1504–1519 (ALTTFVSVAGIIYIIY) is an intramembrane region. Residues 1520–2193 (KLFAGFQGAY…TLRRKWLDSF (674 aa)) are Cytoplasmic-facing. The residue at position 1529 (Tyr1529) is an O-(5'-phospho-RNA)-tyrosine. Positions 1549 to 1727 (GPAFEFAVAM…FSAALLKHYF (179 aa)) constitute a Peptidase C3 domain. Catalysis depends on for protease 3C activity residues His1588, Glu1619, and Cys1695. Residues 1958 to 2074 (GHLIAFDYSG…SYPWPIDASL (117 aa)) form the RdRp catalytic domain. Positions 1964 and 2060 each coordinate Mg(2+).

It belongs to the picornaviruses polyprotein family. Interacts with capsid protein VP1 and capsid protein VP3 to form heterotrimeric protomers. As to quaternary structure, interacts with capsid protein VP0, and capsid protein VP3 to form heterotrimeric protomers. Five protomers subsequently associate to form pentamers which serve as building blocks for the capsid. Interacts with capsid protein VP2, capsid protein VP3 and capsid protein VP4 following cleavage of capsid protein VP0. In terms of assembly, interacts with capsid protein VP1 and capsid protein VP3 in the mature capsid. Interacts with capsid protein VP0 and capsid protein VP1 to form heterotrimeric protomers. Five protomers subsequently associate to form pentamers which serve as building blocks for the capsid. Interacts with capsid protein VP4 in the mature capsid. Interacts with protein 2C; this interaction may be important for virion morphogenesis. As to quaternary structure, interacts with capsid protein VP1 and capsid protein VP3. In terms of assembly, homodimer. Homohexamer; forms a hexameric ring structure with 6-fold symmetry characteristic of AAA+ ATPases. Interacts (via N-terminus) with host RTN3 (via reticulon domain); this interaction is important for viral replication. Interacts with capsid protein VP3; this interaction may be important for virion morphogenesis. As to quaternary structure, interacts with protein 3CD. In terms of assembly, homodimer. Interacts with host GBF1. Interacts (via GOLD domain) with host ACBD3 (via GOLD domain); this interaction allows the formation of a viral protein 3A/ACBD3 heterotetramer with a 2:2 stoichiometry, which will stimulate the recruitment of host PI4KB in order to synthesize PI4P at the viral RNA replication sites. Interacts with RNA-directed RNA polymerase. As to quaternary structure, interacts with protein 3AB and with RNA-directed RNA polymerase. In terms of assembly, interacts with Viral protein genome-linked and with protein 3CD. The cofactor is Mg(2+). Specific enzymatic cleavages in vivo by the viral proteases yield processing intermediates and the mature proteins. In terms of processing, myristoylation is required for the formation of pentamers during virus assembly. Further assembly of 12 pentamers and a molecule of genomic RNA generates the provirion. Post-translationally, during virion maturation, immature virions are rendered infectious following cleavage of VP0 into VP4 and VP2. This maturation seems to be an autocatalytic event triggered by the presence of RNA in the capsid and it is followed by a conformational change infectious virion. Myristoylation is required during RNA encapsidation and formation of the mature virus particle. In terms of processing, VPg is uridylylated by the polymerase into VPg-pUpU. This acts as a nucleotide-peptide primer for the genomic RNA replication.

The protein resides in the virion. The protein localises to the host cytoplasm. Its subcellular location is the host cytoplasmic vesicle membrane. It localises to the host nucleus. It catalyses the reaction a ribonucleoside 5'-triphosphate + H2O = a ribonucleoside 5'-diphosphate + phosphate + H(+). The catalysed reaction is Selective cleavage of Tyr-|-Gly bond in the picornavirus polyprotein.. It carries out the reaction RNA(n) + a ribonucleoside 5'-triphosphate = RNA(n+1) + diphosphate. The enzyme catalyses Selective cleavage of Gln-|-Gly bond in the poliovirus polyprotein. In other picornavirus reactions Glu may be substituted for Gln, and Ser or Thr for Gly.. Replication or transcription is subject to high level of random mutations by the nucleotide analog ribavirin. In terms of biological role, forms an icosahedral capsid of pseudo T=3 symmetry with capsid proteins VP2 and VP3. The capsid is 300 Angstroms in diameter, composed of 60 copies of each capsid protein and enclosing the viral positive strand RNA genome. Capsid protein VP1 mainly forms the vertices of the capsid. Capsid protein VP1 interacts with host cell receptor to provide virion attachment to target host cells. This attachment induces virion internalization. Tyrosine kinases are probably involved in the entry process. After binding to its receptor, the capsid undergoes conformational changes. Capsid protein VP1 N-terminus (that contains an amphipathic alpha-helix) and capsid protein VP4 are externalized. Together, they shape a pore in the host membrane through which viral genome is translocated to host cell cytoplasm. Functionally, forms an icosahedral capsid of pseudo T=3 symmetry with capsid proteins VP2 and VP3. The capsid is 300 Angstroms in diameter, composed of 60 copies of each capsid protein and enclosing the viral positive strand RNA genome. Its function is as follows. Lies on the inner surface of the capsid shell. After binding to the host receptor, the capsid undergoes conformational changes. Capsid protein VP4 is released, Capsid protein VP1 N-terminus is externalized, and together, they shape a pore in the host membrane through which the viral genome is translocated into the host cell cytoplasm. Component of immature procapsids, which is cleaved into capsid proteins VP4 and VP2 after maturation. Allows the capsid to remain inactive before the maturation step. In terms of biological role, cysteine protease that cleaves viral polyprotein and specific host proteins. It is responsible for the autocatalytic cleavage between the P1 and P2 regions, which is the first cleavage occurring in the polyprotein. Also cleaves the host translation initiation factor EIF4G1, in order to shut down the capped cellular mRNA translation. Inhibits the host nucleus-cytoplasm protein and RNA trafficking by cleaving host members of the nuclear pores. Counteracts stress granule formation probably by antagonizing its assembly or promoting its dissassembly. Functionally, plays an essential role in the virus replication cycle by acting as a viroporin. Creates a pore in the host endoplasmic reticulum and as a consequence releases Ca2+ in the cytoplasm of infected cell. In turn, high levels of cytoplasmic calcium may trigger membrane trafficking and transport of viral ER-associated proteins to viroplasms, sites of viral genome replication. Its function is as follows. Induces and associates with structural rearrangements of intracellular membranes. Displays RNA-binding, nucleotide binding and NTPase activities. May play a role in virion morphogenesis and viral RNA encapsidation by interacting with the capsid protein VP3. Localizes the viral replication complex to the surface of membranous vesicles. Together with protein 3CD binds the Cis-Active RNA Element (CRE) which is involved in RNA synthesis initiation. Acts as a cofactor to stimulate the activity of 3D polymerase, maybe through a nucleid acid chaperone activity. In terms of biological role, localizes the viral replication complex to the surface of membranous vesicles. It inhibits host cell endoplasmic reticulum-to-Golgi apparatus transport and causes the disassembly of the Golgi complex, possibly through GBF1 interaction. This would result in depletion of MHC, trail receptors and IFN receptors at the host cell surface. Plays an essential role in viral RNA replication by recruiting ACBD3 and PI4KB at the viral replication sites, thereby allowing the formation of the rearranged membranous structures where viral replication takes place. Functionally, acts as a primer for viral RNA replication and remains covalently bound to viral genomic RNA. VPg is uridylylated prior to priming replication into VPg-pUpU. The oriI viral genomic sequence may act as a template for this. The VPg-pUpU is then used as primer on the genomic RNA poly(A) by the RNA-dependent RNA polymerase to replicate the viral genome. During genome replication, the VPg-RNA linkage is removed by the host TDP2, thereby accelerating replication. During the late stage of the replication cycle, host TDP2 is excluded from sites of viral RNA synthesis and encapsidation, allowing for the generation of progeny virions. Its function is as follows. Involved in the viral replication complex and viral polypeptide maturation. It exhibits protease activity with a specificity and catalytic efficiency that is different from protease 3C. Protein 3CD lacks polymerase activity. Protein 3CD binds to the 5'UTR of the viral genome. Replicates the viral genomic RNA on the surface of intracellular membranes. May form linear arrays of subunits that propagate along a strong head-to-tail interaction called interface-I. Covalently attaches UMP to a tyrosine of VPg, which is used to prime RNA synthesis. The positive stranded RNA genome is first replicated at virus induced membranous vesicles, creating a dsRNA genomic replication form. This dsRNA is then used as template to synthesize positive stranded RNA genomes. ss(+)RNA genomes are either translated, replicated or encapsidated. In terms of biological role, major viral protease that mediates proteolytic processing of the polyprotein. Cleaves host EIF5B, contributing to host translation shutoff. Also cleaves host PABPC1, contributing to host translation shutoff. Cleaves host NLRP1, triggers host N-glycine-mediated degradation of the autoinhibitory NLRP1 N-terminal fragment. The polypeptide is Genome polyprotein (Echovirus 9 (strain Hill)).